A 592-amino-acid polypeptide reads, in one-letter code: Aspartate--tRNA ligase (592 aa).

Position 173 (E173) interacts with L-aspartate. The segment at 197–200 is aspartate; that stretch reads QLFK. L-aspartate is bound at residue R219. ATP is bound by residues 219 to 221 and Q228; that span reads RDE. Residue H448 participates in L-aspartate binding. E482 contacts ATP. Residue R489 participates in L-aspartate binding. 534–537 lines the ATP pocket; it reads GLDR.

It belongs to the class-II aminoacyl-tRNA synthetase family. Type 1 subfamily. As to quaternary structure, homodimer.

The protein resides in the cytoplasm. It catalyses the reaction tRNA(Asp) + L-aspartate + ATP = L-aspartyl-tRNA(Asp) + AMP + diphosphate. Functionally, catalyzes the attachment of L-aspartate to tRNA(Asp) in a two-step reaction: L-aspartate is first activated by ATP to form Asp-AMP and then transferred to the acceptor end of tRNA(Asp). This chain is Aspartate--tRNA ligase, found in Shewanella baltica (strain OS223).